Here is a 190-residue protein sequence, read N- to C-terminus: Elongation factor P (190 aa).

The protein belongs to the elongation factor P family.

The protein localises to the cytoplasm. It functions in the pathway protein biosynthesis; polypeptide chain elongation. Functionally, involved in peptide bond synthesis. Stimulates efficient translation and peptide-bond synthesis on native or reconstituted 70S ribosomes in vitro. Probably functions indirectly by altering the affinity of the ribosome for aminoacyl-tRNA, thus increasing their reactivity as acceptors for peptidyl transferase. The sequence is that of Elongation factor P from Hyphomonas neptunium (strain ATCC 15444).